We begin with the raw amino-acid sequence, 133 residues long: Phosphoribosyl-ATP pyrophosphatase (133 aa).

The disordered stretch occupies residues 1–22 (MGKPATKPAPKPSKQQDDKKSD).

Belongs to the PRA-PH family.

The protein localises to the cytoplasm. The catalysed reaction is 1-(5-phospho-beta-D-ribosyl)-ATP + H2O = 1-(5-phospho-beta-D-ribosyl)-5'-AMP + diphosphate + H(+). It participates in amino-acid biosynthesis; L-histidine biosynthesis; L-histidine from 5-phospho-alpha-D-ribose 1-diphosphate: step 2/9. The sequence is that of Phosphoribosyl-ATP pyrophosphatase from Gluconobacter oxydans (strain 621H) (Gluconobacter suboxydans).